Reading from the N-terminus, the 174-residue chain is MSLQRSEKEAVISEVSRLVAKAQTLVLAEYRGITVADMTKLRVQARSNGVRLSVLKNTLARRAVAGSAFDVLAGQMTGPLIYGFSEDAVAAAKVVAEFAKTNDKLVIRAGAFAGKALDVNGVKQLASIPSKEVLLAQLCGLLMSPISRTAVVLSALAAKKGEGEGVGQAQAVPA.

It belongs to the universal ribosomal protein uL10 family. Part of the ribosomal stalk of the 50S ribosomal subunit. The N-terminus interacts with L11 and the large rRNA to form the base of the stalk. The C-terminus forms an elongated spine to which L12 dimers bind in a sequential fashion forming a multimeric L10(L12)X complex.

Functionally, forms part of the ribosomal stalk, playing a central role in the interaction of the ribosome with GTP-bound translation factors. The sequence is that of Large ribosomal subunit protein uL10 from Verminephrobacter eiseniae (strain EF01-2).